Here is a 365-residue protein sequence, read N- to C-terminus: Synapse-associated protein 1 (365 aa).

A disordered region spans residues 1–65 (MFGGLSSWLG…QPPTEDPQFL (65 aa)). Low complexity predominate over residues 52 to 62 (EQQQQPPTEDP). Residues 172–224 (VQFNFDFDQMYPVALVMLQEDELLSKMRFALVPKLVKEEVFWRNYFYRISLIK) form the BSD domain. The segment at 237–259 (QASGKEEKSSNRDDNLPLTEAVR) is disordered. Residues 240–251 (GKEEKSSNRDDN) are compositionally biased toward basic and acidic residues. T262 carries the post-translational modification Phosphothreonine. A phosphoserine mark is found at S283, S298, and S327. The tract at residues 344-365 (VAESEKRDENWDKEIEKMLQES) is disordered. The segment covering 346-365 (ESEKRDENWDKEIEKMLQES) has biased composition (basic and acidic residues).

In terms of assembly, interacts (via phosphorylated form and BSD domain) with AKT1; this interaction is enhanced in a mTORC2-mediated manner in response to epidermal growth factor (EGF) stimulation and activates AKT1. Post-translationally, phosphorylated. Phosphorylation increases in a mTORC2-mediated manner in response to epidermal growth factor (EGF) stimulation. As to expression, expressed in the liver, kidney, skeletal muscle and in white and brown adipose tissues. Expressed in the cortex, cerebellum, thalamus, hippocampus, braistem, olfactory bulb, spinal cord and striatum of the brain. Expressed in most neuropil regions containing glutamatergic synaptic terminals. Expressed in the CA1, CA2 and CA3 perikarya of the hippocampus. Expressed in neurons and Purkinje cells (at the protein level).

It is found in the cytoplasm. The protein localises to the perinuclear region. It localises to the golgi apparatus. Its subcellular location is the perikaryon. The protein resides in the cell projection. It is found in the axon. The protein localises to the dendrite. It localises to the growth cone. Its subcellular location is the presynaptic cell membrane. The protein resides in the postsynaptic cell membrane. It is found in the membrane. Its function is as follows. Plays a role in adipocyte differentiation by promoting mTORC2-mediated phosphorylation of AKT1 at 'Ser-473' after growth factor stimulation. The chain is Synapse-associated protein 1 from Mus musculus (Mouse).